A 214-amino-acid polypeptide reads, in one-letter code: MKTINIVAGGPKNLIPDLTGYTDEHTLWIGVDKGTVTLLDAGIIPVEAFGDFDSITEQERRRIEKAAPALHVYQAEKDQTDLDLALDWALEKQPDIIQIFGITGGRADHFLGNIQLLYKGVKTNIKIRLIDKQNHIQMFPPGEYDIEKDENKRYISFIPFSEDIHELTLTGFKYPLNNCHITLGSTLCISNELIHSRGTFSFAKGILIMIRSTD.

The protein belongs to the thiamine pyrophosphokinase family.

It catalyses the reaction thiamine + ATP = thiamine diphosphate + AMP + H(+). Its pathway is cofactor biosynthesis; thiamine diphosphate biosynthesis; thiamine diphosphate from thiamine: step 1/1. Catalyzes the ATP-dependent phosphorylation of thiamine to thiamine pyrophosphate. Is involved in thiamine salvage. This Bacillus subtilis (strain 168) protein is Thiamine pyrophosphokinase.